Consider the following 471-residue polypeptide: Putative multidrug resistance protein MdtD (471 aa).

Helical transmembrane passes span 12-32, 49-69, 77-97, 106-126, 138-158, 165-185, 195-215, 220-240, 263-283, 286-306, 342-362, 393-413, and 431-451; these read LWIVAFGFFMQSLDTTIVNTA, MIIVSYVLTVAVMLPASGWLA, IFFTAIVLFTAGSLFCAQAST, VLQGIGGAMMVPVGRLTVMKI, FVTLPGQVGPLLGPALGGVLV, WIFLINIPVGIVGAIATLCLM, FDLSGFLLLAAGMATLTLALD, LGISSRWLAGLVAVGLAALLL, FSLGLGGSFAGRIGSGMLPFM, VFLQIGLGFSPFHAGLMMIPM, LLFMFSALAGWYYALPLVLFL, LLSMVMQLSMSIGVTIAGLLL, and VFLYTYLSMAAIIALPALIFS.

It belongs to the major facilitator superfamily. TCR/Tet family.

It localises to the cell inner membrane. The polypeptide is Putative multidrug resistance protein MdtD (Klebsiella pneumoniae (strain 342)).